Consider the following 158-residue polypeptide: Copper transporter 2 (158 aa).

The segment at 1–20 (MDHDHMHDMPPPSPSSSSMS) is disordered. 2 helical membrane-spanning segments follow: residues 53 to 73 (GMYA…EWLA) and 104 to 124 (YLVM…AIAG).

Belongs to the copper transporter (Ctr) (TC 1.A.56) family. SLC31A subfamily. In terms of tissue distribution, highly expressed in leaves and at lower levels in roots, stems and flowers.

It localises to the membrane. Involved in the transport of copper. In Arabidopsis thaliana (Mouse-ear cress), this protein is Copper transporter 2 (COPT2).